We begin with the raw amino-acid sequence, 111 residues long: UPF0145 protein BMA10229_A0446 (111 aa).

Belongs to the UPF0145 family.

This chain is UPF0145 protein BMA10229_A0446, found in Burkholderia mallei (strain NCTC 10229).